The following is a 227-amino-acid chain: Pre-hexon-linking protein VIII (227 aa).

Position 64 is a phosphothreonine; by host (threonine 64). A propeptide spanning residues 112 to 157 is cleaved from the precursor; it reads FRHRVRSPGQGITHLTIRGRGIQLNDESVSSSLGLRPDGTFQIGGA. Phosphoserine; by host occurs at positions 118 and 174.

The protein belongs to the adenoviridae hexon-linking protein family. Interacts with the peripentonal hexons as well as the hexons in the facets. Part of a complex composed of the core-capsid bridging protein, the endosome lysis protein VI and the hexon-linking protein VIII; these interactions bridge the virus core to the capsid. Post-translationally, cleaved by the viral protease during virion maturation. May cause the middle segment to be shed from the capsid.

It is found in the virion. The protein localises to the host nucleus. Its function is as follows. Structural component of the virion that acts as a cement protein on the capsid interior and which glue the peripentonal hexons and group-of-nine hexons together. This chain is Pre-hexon-linking protein VIII, found in Human adenovirus C serotype 5 (HAdV-5).